The sequence spans 632 residues: MAU2 chromatid cohesion factor homolog (632 aa).

TPR repeat units lie at residues 453-486 and 493-526; these read GGFY…ANAE and SCSL…ASKI.

This sequence belongs to the SCC4/mau-2 family. In terms of assembly, interacts with Nipped-B to form the cohesin loading complex.

The protein resides in the nucleus. It localises to the nucleoplasm. Its function is as follows. Required for association of the cohesin complex with chromatin during interphase. Plays a role in sister chromatid cohesion and normal progression through prometaphase. This Drosophila erecta (Fruit fly) protein is MAU2 chromatid cohesion factor homolog.